Here is a 517-residue protein sequence, read N- to C-terminus: Phospholipase C C (517 aa).

The tat-type signal signal peptide spans 1–39 (MVSQGAFAGMSRRAFLAKAAGAGAAAVLTDWAAPVIEKA).

This sequence belongs to the bacterial phospholipase C family. In terms of processing, predicted to be exported by the Tat system. The position of the signal peptide cleavage has not been experimentally proven.

It localises to the secreted. It is found in the cell wall. It carries out the reaction a 1,2-diacyl-sn-glycero-3-phosphocholine + H2O = phosphocholine + a 1,2-diacyl-sn-glycerol + H(+). The catalysed reaction is 1,2-dihexadecanoyl-sn-glycero-3-phosphocholine + H2O = 1,2-dihexadecanoyl-sn-glycerol + phosphocholine + H(+). Involved in virulence. Induces cytotoxic effects on mouse macrophage cell lines, via direct or indirect enzymatic hydrolysis of cell membrane phospholipids. Hydrolyzes phosphatidylcholine. Does not have hemolytic activity. In Mycobacterium tuberculosis (strain ATCC 25618 / H37Rv), this protein is Phospholipase C C.